Here is a 218-residue protein sequence, read N- to C-terminus: MLGFLEKVADYTKEAVSAAKYLVDGLGVTFDHMRRRPVTVQYPYEKLIPSERYRGRIHYEFDKCIACEVCVRVCPINLPVVDWVMNKETKKKELRNYSIDFGACIFCGNCVEYCPTNCLSMTEEYELSAFDRHSLNYDNVALGRLPTSVTSDPSVRPLRELPYLPKGIMDPHELPANQQRAGKLPSQIIKELQAEKSEEKGNNNSSDIVPNKLNSTNK.

4Fe-4S ferredoxin-type domains are found at residues Gly55–Val84 and Arg95–Glu124. Positions 64, 67, 70, 74, 104, 107, 110, and 114 each coordinate [4Fe-4S] cluster. Residues Met169–Lys218 are disordered. The segment covering Leu192–Gly201 has biased composition (basic and acidic residues). Positions Asn202–Lys218 are enriched in polar residues.

Belongs to the complex I 23 kDa subunit family. In terms of assembly, NDH-1 is composed of at least 11 different subunits. It depends on [4Fe-4S] cluster as a cofactor.

Its subcellular location is the cellular thylakoid membrane. It catalyses the reaction a plastoquinone + NADH + (n+1) H(+)(in) = a plastoquinol + NAD(+) + n H(+)(out). The catalysed reaction is a plastoquinone + NADPH + (n+1) H(+)(in) = a plastoquinol + NADP(+) + n H(+)(out). Its function is as follows. NDH-1 shuttles electrons from an unknown electron donor, via FMN and iron-sulfur (Fe-S) centers, to quinones in the respiratory and/or the photosynthetic chain. The immediate electron acceptor for the enzyme in this species is believed to be plastoquinone. Couples the redox reaction to proton translocation, and thus conserves the redox energy in a proton gradient. This is NAD(P)H-quinone oxidoreductase subunit I from Prochlorococcus marinus (strain NATL1A).